The sequence spans 512 residues: Alanine--glyoxylate aminotransferase 2, mitochondrial (512 aa).

The N-terminal 39 residues, 1-39, are a transit peptide targeting the mitochondrion; it reads MSLAWRTLQKAFYLETSLRILQMRPSLSCASRIYVPKLT. Lys55 bears the N6-acetyllysine mark. An N6-acetyllysine; alternate modification is found at Lys69. Lys69 carries the N6-succinyllysine; alternate modification. The residue at position 82 (Lys82) is an N6-acetyllysine. N6-acetyllysine; alternate is present on Lys260. Lys260 is modified (N6-succinyllysine; alternate). An N6-succinyllysine modification is found at Lys302. At Lys348 the chain carries N6-(pyridoxal phosphate)lysine. Lys415 and Lys418 each carry N6-acetyllysine; alternate. N6-succinyllysine; alternate is present on residues Lys415 and Lys418. An N6-acetyllysine modification is found at Lys452.

This sequence belongs to the class-III pyridoxal-phosphate-dependent aminotransferase family. As to quaternary structure, homotetramer. The cofactor is pyridoxal 5'-phosphate. In terms of tissue distribution, expressed in the liver, lung and kidney.

Its subcellular location is the mitochondrion. It carries out the reaction glyoxylate + L-alanine = glycine + pyruvate. It catalyses the reaction (R)-3-amino-2-methylpropanoate + pyruvate = 2-methyl-3-oxopropanoate + L-alanine. The catalysed reaction is 3-oxopropanoate + L-alanine = beta-alanine + pyruvate. The enzyme catalyses 2-oxobutanoate + L-alanine = (2S)-2-aminobutanoate + pyruvate. It carries out the reaction N(omega),N(omega)-dimethyl-L-arginine + pyruvate = 5-(3,3-dimethylguanidino)-2-oxopentanoate + L-alanine. It catalyses the reaction N(omega),N('omega)-dimethyl-L-arginine + pyruvate = 5-(3,3'-dimethylguanidino)-2-oxopentanoate + L-alanine. The catalysed reaction is N(omega),N(omega)-dimethyl-L-arginine + glyoxylate = 5-(3,3-dimethylguanidino)-2-oxopentanoate + glycine. The enzyme catalyses N(omega),N('omega)-dimethyl-L-arginine + glyoxylate = 5-(3,3'-dimethylguanidino)-2-oxopentanoate + glycine. It carries out the reaction N(omega)-methyl-L-arginine + pyruvate = 5-(3-methylguanidino)-2-oxopentanoate + L-alanine. It catalyses the reaction N(omega)-methyl-L-arginine + glyoxylate = 5-(3-methylguanidino)-2-oxopentanoate + glycine. The catalysed reaction is L-ornithine + pyruvate = 5-amino-2-oxopentanoate + L-alanine. The enzyme catalyses L-ornithine + glyoxylate = 5-amino-2-oxopentanoate + glycine. It carries out the reaction (2S)-2-aminobutanoate + glyoxylate = 2-oxobutanoate + glycine. It catalyses the reaction N(omega),N(omega)-dimethyl-L-arginine + oxaloacetate = 5-(3,3-dimethylguanidino)-2-oxopentanoate + L-aspartate. The catalysed reaction is oxaloacetate + L-alanine = L-aspartate + pyruvate. The enzyme catalyses N(omega),N(omega)-dimethyl-L-arginine + 2-oxobutanoate = 5-(3,3-dimethylguanidino)-2-oxopentanoate + (2S)-2-aminobutanoate. It carries out the reaction 2-oxopentanoate + N(omega),N(omega)-dimethyl-L-arginine = 5-(3,3-dimethylguanidino)-2-oxopentanoate + L-2-aminopentanoate. It catalyses the reaction 2-oxohexanoate + N(omega),N(omega)-dimethyl-L-arginine = L-2-aminohexanoate + 5-(3,3-dimethylguanidino)-2-oxopentanoate. With respect to regulation, inhibited by 5-fluorouracil and 6-fluorouracil. Inhibited by phenylhydrazine, hydroxylamine, l-amino-L-proline, para-chloromercuribenzoate and HgCl2. Functionally, multifunctional aminotransferase with a broad substrate specificity. Catalyzes the conversion of glyoxylate to glycine using alanine as the amino donor. Catalyzes metabolism of not L- but the D-isomer of D-beta-aminoisobutyric acid to generate 2-methyl-3-oxopropanoate and alanine. Catalyzes the transfer of the amino group from beta-alanine to pyruvate to yield L-alanine and 3-oxopropanoate. Can metabolize NG-monomethyl-L-arginine (NMMA), asymmetric NG,NG-dimethyl-L-arginine (ADMA) and symmetric NG,N'G-dimethyl-L-arginine (SDMA). ADMA is a potent inhibitor of nitric-oxide (NO) synthase, and this activity provides mechanism through which the kidney regulates blood pressure. In Rattus norvegicus (Rat), this protein is Alanine--glyoxylate aminotransferase 2, mitochondrial (Agxt2).